Reading from the N-terminus, the 227-residue chain is Ubiquitin domain-containing protein 1 (227 aa).

The segment at 1–42 (MGNCVGRQRRERPAAPGHPRKRAGRNEPLKKERLKWKSDYPM) is disordered. The span at 24-38 (GRNEPLKKERLKWKS) shows a compositional bias: basic and acidic residues. One can recognise a Ubiquitin-like domain in the interval 149–224 (FPLKVRLSTG…IQVIINQPPP (76 aa)).

In terms of assembly, interacts with UBTD1.

Functionally, may be involved in the regulation of cellular senescence through a positive feedback loop with TP53. Is a TP53 downstream target gene that increases the stability of TP53 protein by promoting the ubiquitination and degradation of MDM2. The polypeptide is Ubiquitin domain-containing protein 1 (Ubtd1) (Mus musculus (Mouse)).